Here is a 119-residue protein sequence, read N- to C-terminus: Large ribosomal subunit protein uL18 (119 aa).

The protein belongs to the universal ribosomal protein uL18 family. Part of the 50S ribosomal subunit; part of the 5S rRNA/L5/L18/L25 subcomplex. Contacts the 5S and 23S rRNAs.

Functionally, this is one of the proteins that bind and probably mediate the attachment of the 5S RNA into the large ribosomal subunit, where it forms part of the central protuberance. The chain is Large ribosomal subunit protein uL18 from Anaeromyxobacter dehalogenans (strain 2CP-1 / ATCC BAA-258).